We begin with the raw amino-acid sequence, 486 residues long: Hydrogenobyrinate a,c-diamide synthase (486 aa).

Residues 254-272 (SPPPPLPVPSPGAAPPDPL) show a composition bias toward pro residues. Residues 254-284 (SPPPPLPVPSPGAAPPDPLVRPGRPRPQAPD) form a disordered region. The GATase cobBQ-type domain occupies 289-474 (RVAMASGAAF…LHTHWAAEPG (186 aa)). C372 functions as the Nucleophile in the catalytic mechanism.

The protein belongs to the CobB/CbiA family. The cofactor is Mg(2+).

The catalysed reaction is hydrogenobyrinate + 2 L-glutamine + 2 ATP + 2 H2O = hydrogenobyrinate a,c-diamide + 2 L-glutamate + 2 ADP + 2 phosphate + 2 H(+). Its pathway is cofactor biosynthesis; adenosylcobalamin biosynthesis; cob(II)yrinate a,c-diamide from precorrin-2 (aerobic route): step 9/10. Functionally, catalyzes the ATP-dependent amidation of the two carboxylate groups at positions a and c of hydrogenobyrinate, using either L-glutamine or ammonia as the nitrogen source. This chain is Hydrogenobyrinate a,c-diamide synthase, found in Streptomyces coelicolor (strain ATCC BAA-471 / A3(2) / M145).